A 496-amino-acid polypeptide reads, in one-letter code: Alanine aminotransferase 1 (496 aa).

The residue at position 2 (Ala2) is an N-acetylalanine. Thr22 bears the Phosphothreonine mark. Position 314 is an N6-(pyridoxal phosphate)lysine (Lys314).

It belongs to the class-I pyridoxal-phosphate-dependent aminotransferase family. Alanine aminotransferase subfamily. Homodimer. It depends on pyridoxal 5'-phosphate as a cofactor. Mainly expressed in liver, intestine, colon and white adipose tissue.

It is found in the cytoplasm. The catalysed reaction is L-alanine + 2-oxoglutarate = pyruvate + L-glutamate. The protein operates within amino-acid degradation; L-alanine degradation via transaminase pathway; pyruvate from L-alanine: step 1/1. Its function is as follows. Catalyzes the reversible transamination between alanine and 2-oxoglutarate to form pyruvate and glutamate. Participates in cellular nitrogen metabolism and also in liver gluconeogenesis starting with precursors transported from skeletal muscles. This is Alanine aminotransferase 1 (Gpt) from Mus musculus (Mouse).